Here is a 257-residue protein sequence, read N- to C-terminus: GTP cyclohydrolase FolE2 (257 aa).

Belongs to the GTP cyclohydrolase IV family.

The enzyme catalyses GTP + H2O = 7,8-dihydroneopterin 3'-triphosphate + formate + H(+). The protein operates within cofactor biosynthesis; 7,8-dihydroneopterin triphosphate biosynthesis; 7,8-dihydroneopterin triphosphate from GTP: step 1/1. Functionally, converts GTP to 7,8-dihydroneopterin triphosphate. The chain is GTP cyclohydrolase FolE2 from Pelobacter propionicus (strain DSM 2379 / NBRC 103807 / OttBd1).